Consider the following 126-residue polypeptide: Calcitonin receptor-stimulating peptide 1 (126 aa).

The first 25 residues, 1–25, serve as a signal peptide directing secretion; it reads MGFWKFPPFLVLSILVLYQAGMFHT. The propeptide occupies 26-78; the sequence is APMRSAFGSPFDPATLSEEESRLLLAAMVNDYEQMKAREMQKQRAQGSGISVQ. The cysteines at positions 82 and 87 are disulfide-linked. The residue at position 118 (Gly-118) is a Glycine amide. Positions 123–126 are excised as a propeptide; the sequence is NFWI.

In terms of tissue distribution, mainly expressed in the thyroid gland and CNS. Found in the nerve cells of cerebrum, hippocampus, hypothalamus, pons/midbrain and thalamus.

It is found in the secreted. Its function is as follows. Stimulates cAMP production in porcine kidney cell line LLC-PK1 via the calcitonin receptor (CT) but not via the CT-like (CL) receptor. In Sus scrofa (Pig), this protein is Calcitonin receptor-stimulating peptide 1 (CRSP1).